The chain runs to 365 residues: Putative DNA-directed RNA polymerase subunit alpha-like 3 (365 aa).

It belongs to the RNA polymerase alpha chain family. In plastids the minimal PEP RNA polymerase catalytic core is composed of four subunits: alpha, beta, beta', and beta''. When a (nuclear-encoded) sigma factor is associated with the core the holoenzyme is formed, which can initiate transcription.

It is found in the plastid. Its subcellular location is the chloroplast. The catalysed reaction is RNA(n) + a ribonucleoside 5'-triphosphate = RNA(n+1) + diphosphate. In terms of biological role, DNA-dependent RNA polymerase catalyzes the transcription of DNA into RNA using the four ribonucleoside triphosphates as substrates. This chain is Putative DNA-directed RNA polymerase subunit alpha-like 3 (rpoAL3-A), found in Pelargonium hortorum (Common geranium).